The following is a 185-amino-acid chain: MTTIVSVRRGDKVVIGGDGQVSLGNTVMKGNARKVRRLYHDKVLAGFAGGTADAFTLFERFESKLEQHQGNLMRAAVELAKDWRTDRALRRLEALLAVADKETSLIITGNGDVVQPENDLIAIGSGGPFAQSAARALLENTDLNARDIVQKALTIAGDICVYTNGNQTIEEEESIAEDKTKQGKK.

Thr2 is a catalytic residue. Residues Gly157, Cys160, and Thr163 each contribute to the Na(+) site.

This sequence belongs to the peptidase T1B family. HslV subfamily. As to quaternary structure, a double ring-shaped homohexamer of HslV is capped on each side by a ring-shaped HslU homohexamer. The assembly of the HslU/HslV complex is dependent on binding of ATP.

Its subcellular location is the cytoplasm. It carries out the reaction ATP-dependent cleavage of peptide bonds with broad specificity.. Allosterically activated by HslU binding. In terms of biological role, protease subunit of a proteasome-like degradation complex believed to be a general protein degrading machinery. In Idiomarina loihiensis (strain ATCC BAA-735 / DSM 15497 / L2-TR), this protein is ATP-dependent protease subunit HslV.